Here is a 218-residue protein sequence, read N- to C-terminus: Probable nicotinate-nucleotide adenylyltransferase (218 aa).

The protein belongs to the NadD family.

It catalyses the reaction nicotinate beta-D-ribonucleotide + ATP + H(+) = deamido-NAD(+) + diphosphate. It functions in the pathway cofactor biosynthesis; NAD(+) biosynthesis; deamido-NAD(+) from nicotinate D-ribonucleotide: step 1/1. In terms of biological role, catalyzes the reversible adenylation of nicotinate mononucleotide (NaMN) to nicotinic acid adenine dinucleotide (NaAD). This is Probable nicotinate-nucleotide adenylyltransferase from Burkholderia lata (strain ATCC 17760 / DSM 23089 / LMG 22485 / NCIMB 9086 / R18194 / 383).